We begin with the raw amino-acid sequence, 959 residues long: DEAD-box ATP-dependent RNA helicase rde-12 (959 aa).

Residues 1 to 336 (MSSFGNNAGG…EGVNAPVRAP (336 aa)) form a disordered region. Over residues 71–97 (GRREDDRSHSRDNHGGSRYGERDDRGN) the composition is skewed to basic and acidic residues. Over residues 98-118 (NGRSADNRYSQSNYNYDSNRG) the composition is skewed to polar residues. The segment covering 122–134 (YQRDNHGSKDDRG) has biased composition (basic and acidic residues). Residues 137–160 (NQYNDHGSNHNSNSRNDQYRQGSY) show a composition bias toward polar residues. 2 stretches are compositionally biased toward basic and acidic residues: residues 166-181 (SGYRRDDDRRRNDNDQ) and 189-201 (RDSDRNSPRDHHN). The segment covering 202 to 213 (YNSQSSPRSHQG) has biased composition (polar residues). Composition is skewed to basic and acidic residues over residues 219-239 (SAPKEDNQRRYDNHQGGHDSY) and 255-270 (YRNDYRSQQDSRDHRS). Residues 271–280 (GGNNSSSGFK) are compositionally biased toward low complexity. The segment covering 281–301 (NDGGFGGNDNRGFGNNGGGSF) has biased composition (gly residues). Positions 302 to 317 (GNPNNSYRGNSNNIGG) are enriched in low complexity. Positions 380–408 (TSWTNSGLHPTILETLKRIKYNNVRTIQG) match the Q motif motif. The region spanning 411–599 (IPQVLDGHDV…NELMKRLPGQ (189 aa)) is the Helicase ATP-binding domain. 424–431 (AETSAGKT) serves as a coordination point for ATP. The short motif at 539–542 (DEAD) is the DEAD box element. The region spanning 632-792 (KLREILKQNV…KVPDFLDAMA (161 aa)) is the Helicase C-terminal domain. Disordered regions lie at residues 793–834 (KSSR…GGGR) and 858–959 (GGGG…DDEW). Composition is skewed to gly residues over residues 800-834 (GTSGFGQRGGYGGRGGGFGGTGRGRGGGVFGGGGR) and 858-872 (GGGGFGGVKPSGFGG). Positions 930 to 941 (TLGSSTFGTANN) are enriched in polar residues. Residues 942–959 (ADEEPTETGADGNDDDEW) are compositionally biased toward acidic residues.

The protein belongs to the DEAD box helicase family. DDX3/DED1 subfamily. As to quaternary structure, interacts with wago-1, ergo-1 and rde-1. The cofactor is Mg(2+). As to expression, expressed in the soma and germline.

It localises to the cytoplasm. It is found in the perinuclear region. The protein localises to the cytoplasmic granule. Its subcellular location is the P-body. It catalyses the reaction ATP + H2O = ADP + phosphate + H(+). Its function is as follows. Probable ATP-dependent RNA helicase involved in RNAi-mediated gene silencing. Specifically required in the endogenous siRNA pathway for biogenesis of secondary endogenous small interfering RNA (siRNA) intermediates called 22G-RNAs. May associate with and recruit rde-10 to primary siRNA-targeted mRNA for secondary siRNA synthesis. May be recruited to target mRNAs by rde-1 and/or ergo-1. This is DEAD-box ATP-dependent RNA helicase rde-12 from Caenorhabditis elegans.